An 800-amino-acid polypeptide reads, in one-letter code: uncharacterized protein (800 aa).

A signal peptide spans M1–A21. The span at S63–I72 shows a compositional bias: polar residues. Disordered regions lie at residues S63–T470, T602–S670, and S710–S776. 4 stretches are compositionally biased toward low complexity: residues T73 to S314, S321 to S368, S375 to P444, and T451 to T470. Low complexity predominate over residues S710–T720. Residues E721–K734 are compositionally biased toward polar residues. Positions T735–S776 are enriched in low complexity.

The protein resides in the secreted. It localises to the cell surface. This is an uncharacterized protein from Schizosaccharomyces pombe (strain 972 / ATCC 24843) (Fission yeast).